The sequence spans 142 residues: Ninjurin-2 (142 aa).

The tract at residues 1–21 is disordered; sequence MESARENIDLQPGSSDPRSQP. At 1–60 the chain is on the extracellular side; the sequence is MESARENIDLQPGSSDPRSQPINLNHYATKKSVAESMLDVALFMSNAMRLKAVLEQGPSS. Residues 12-21 show a composition bias toward polar residues; it reads PGSSDPRSQP. Residues 25-37 are helix alpha1; the sequence is NHYATKKSVAESM. The segment at 38 to 57 is helix alpha2; that stretch reads LDVALFMSNAMRLKAVLEQG. A helical membrane pass occupies residues 61–92; sequence HYYTTLVTLISLSLLLQVVIGVLLVVIARLNL. Over 93–96 the chain is Cytoplasmic; the sequence is NEVE. Residues 97–126 form a helical membrane-spanning segment; the sequence is KQWRLNQLNNAATILVFFTVVINVFITAFG. Gln103 contributes to the cholesterol binding site. At 127–142 the chain is on the extracellular side; that stretch reads AHKTGFLAARASRNPL.

It belongs to the ninjurin family. In terms of assembly, homooligomer; in response to stimuli, homooligomerizes into filaments. In contrast to NINJ1, the filament is curved toward the intracellular space, preventing its circularization on a relatively flat membrane to mediate plasma membrane rupture: curvature is caused by cholesterol-binding at the cytoplasmic leaflet. In terms of tissue distribution, widely expressed. In adult, higher expression in the bone marrow and peripheral blood lymphocytes, medium in the lung, lymph node, thyroid, uterus, thymus, spleen, prostate and skeletal muscle, lower in the liver, placenta, brain, heart and kidney. In embryo, higher expression in the thymus, heart and liver, lower in the spleen, lung, brain and kidney.

It is found in the cell membrane. Functionally, its role in unclear. In contrast to NINJ1 paralog, does not mediate plasma membrane rupture (cytolysis) downstream of necroptotic and pyroptotic programmed cell death. While it is able to oligomerize and form filaments, filaments are curved toward the intracellular space, preventing circularization to mediate plasma membrane rupture. May act as a homophilic transmembrane adhesion molecule involved in nerve regeneration. Promotes axonal growth. This Homo sapiens (Human) protein is Ninjurin-2.